A 135-amino-acid chain; its full sequence is Fluoride-specific ion channel FluC 1 (135 aa).

A run of 4 helical transmembrane segments spans residues 7-27 (LAVG…GLVL), 32-52 (GFPY…PFLM), 65-85 (LALA…SFSV), and 96-116 (WSAF…LSLL). Na(+) is bound by residues Gly75 and Thr78.

It belongs to the fluoride channel Fluc/FEX (TC 1.A.43) family.

Its subcellular location is the cell membrane. It carries out the reaction fluoride(in) = fluoride(out). Its activity is regulated as follows. Na(+) is not transported, but it plays an essential structural role and its presence is essential for fluoride channel function. Functionally, fluoride-specific ion channel. Important for reducing fluoride concentration in the cell, thus reducing its toxicity. This Latilactobacillus sakei subsp. sakei (strain 23K) (Lactobacillus sakei subsp. sakei) protein is Fluoride-specific ion channel FluC 1.